The primary structure comprises 327 residues: Sideroflexin FSF1 (327 aa).

Residue A2 is modified to N-acetylalanine. Helical transmembrane passes span 98–118 (NLVVTVGMLTPGLGTAGTVFW), 143–163 (SQLLTNYAAAVTASCGVALGL), 179–199 (LILGRLVPFAAVVSAGIVNVF), and 272–292 (ANLGLISVTMFSALPFALGIF).

The protein belongs to the sideroflexin family.

The protein resides in the mitochondrion membrane. Mitochondrial amino-acid transporter that mediates transport of serine into mitochondria. The protein is Sideroflexin FSF1 of Saccharomyces cerevisiae (strain ATCC 204508 / S288c) (Baker's yeast).